Reading from the N-terminus, the 279-residue chain is Energy-coupling factor transporter ATP-binding protein EcfA1 (279 aa).

Residues 6–240 form the ABC transporter domain; sequence VRLEHVFYKY…ADAMRAIGLG (235 aa). 40–47 provides a ligand contact to ATP; it reads GHNGSGKS.

Belongs to the ABC transporter superfamily. Energy-coupling factor EcfA family. Forms a stable energy-coupling factor (ECF) transporter complex composed of 2 membrane-embedded substrate-binding proteins (S component), 2 ATP-binding proteins (A component) and 2 transmembrane proteins (T component).

The protein localises to the cell membrane. Its function is as follows. ATP-binding (A) component of a common energy-coupling factor (ECF) ABC-transporter complex. Unlike classic ABC transporters this ECF transporter provides the energy necessary to transport a number of different substrates. This is Energy-coupling factor transporter ATP-binding protein EcfA1 from Listeria innocua serovar 6a (strain ATCC BAA-680 / CLIP 11262).